The following is a 219-amino-acid chain: Peptide methionine sulfoxide reductase MsrA (219 aa).

A disordered region spans residues 1–20 (MGLFRSPRQNLPTAADALPG). Cys-55 is a catalytic residue.

This sequence belongs to the MsrA Met sulfoxide reductase family.

It catalyses the reaction L-methionyl-[protein] + [thioredoxin]-disulfide + H2O = L-methionyl-(S)-S-oxide-[protein] + [thioredoxin]-dithiol. The catalysed reaction is [thioredoxin]-disulfide + L-methionine + H2O = L-methionine (S)-S-oxide + [thioredoxin]-dithiol. In terms of biological role, has an important function as a repair enzyme for proteins that have been inactivated by oxidation. Catalyzes the reversible oxidation-reduction of methionine sulfoxide in proteins to methionine. The sequence is that of Peptide methionine sulfoxide reductase MsrA from Rhodospirillum centenum (strain ATCC 51521 / SW).